A 280-amino-acid polypeptide reads, in one-letter code: Succinate dehydrogenase [ubiquinone] iron-sulfur subunit 2, mitochondrial (280 aa).

The transit peptide at 1–28 (MAFGLIGRVVGTKSSRLSTAARLIPARW) directs the protein to the mitochondrion. A 2Fe-2S ferredoxin-type domain is found at 51–140 (FQIYRWNPDN…ETTITPLPHM (90 aa)). [2Fe-2S] cluster is bound by residues Cys-101, Cys-106, and Cys-121. One can recognise a 4Fe-4S ferredoxin-type domain in the interval 183–213 (DRAKLDGMYECILCACCSTSCPSYWWNPESY). Positions 193, 196, and 199 each coordinate [4Fe-4S] cluster. Position 203 (Cys-203) interacts with [3Fe-4S] cluster. Trp-208 is a binding site for a ubiquinone. Positions 250 and 256 each coordinate [3Fe-4S] cluster. Cys-260 contributes to the [4Fe-4S] cluster binding site.

Belongs to the succinate dehydrogenase/fumarate reductase iron-sulfur protein family. In terms of assembly, component of complex II composed of eight subunits in plants: four classical SDH subunits SDH1, SDH2, SDH3 and SDH4 (a flavoprotein (FP), an iron-sulfur protein (IP), and a cytochrome b composed of a large and a small subunit.), as well as four subunits unknown in mitochondria from bacteria and heterotrophic eukaryotes. Requires [2Fe-2S] cluster as cofactor. The cofactor is [3Fe-4S] cluster. [4Fe-4S] cluster serves as cofactor. Ubiquitous. Preferentially expressed in flowers, inflorescences and root tips.

It is found in the mitochondrion inner membrane. It carries out the reaction a quinone + succinate = fumarate + a quinol. It participates in carbohydrate metabolism; tricarboxylic acid cycle; fumarate from succinate (eukaryal route): step 1/1. Iron-sulfur protein (IP) subunit of succinate dehydrogenase (SDH) that is involved in complex II of the mitochondrial electron transport chain and is responsible for transferring electrons from succinate to ubiquinone (coenzyme Q). This Arabidopsis thaliana (Mouse-ear cress) protein is Succinate dehydrogenase [ubiquinone] iron-sulfur subunit 2, mitochondrial (SDH2-2).